We begin with the raw amino-acid sequence, 348 residues long: E3 ubiquitin-protein ligase MARCHF9 (348 aa).

Residues 48–96 (ARDGDGDEEEYYGSEPRARGLAGDKEPRAGPPPPPAPPPPPPGALDALS) are disordered. Positions 63-75 (PRARGLAGDKEPR) are enriched in basic and acidic residues. Pro residues predominate over residues 76 to 90 (AGPPPPPAPPPPPPG). An RING-CH-type zinc finger spans residues 102-162 (DSGLRTPQCR…ELCYFKYQVL (61 aa)). Positions 110, 113, 126, 128, 136, 139, 152, and 155 each coordinate Zn(2+). The next 2 membrane-spanning stretches (helical) occupy residues 185 to 205 (IAAI…LIWS) and 219 to 239 (LFQI…GLIV). Disordered regions lie at residues 272-304 (GDTG…AAQR) and 328-348 (PPDA…VTTV).

Homodimer.

Its subcellular location is the golgi apparatus membrane. It is found in the lysosome membrane. The catalysed reaction is S-ubiquitinyl-[E2 ubiquitin-conjugating enzyme]-L-cysteine + [acceptor protein]-L-lysine = [E2 ubiquitin-conjugating enzyme]-L-cysteine + N(6)-ubiquitinyl-[acceptor protein]-L-lysine.. The protein operates within protein modification; protein ubiquitination. E3 ubiquitin-protein ligase that may mediate ubiquitination of MHC-I, CD4 and ICAM1, and promote their subsequent endocytosis and sorting to lysosomes via multivesicular bodies. E3 ubiquitin ligases accept ubiquitin from an E2 ubiquitin-conjugating enzyme in the form of a thioester and then directly transfer the ubiquitin to targeted substrates. The chain is E3 ubiquitin-protein ligase MARCHF9 (Marchf9) from Mus musculus (Mouse).